Consider the following 273-residue polypeptide: Dermonecrotic toxin LhSicTox-alphaIA2bvi (273 aa).

His5 is a catalytic residue. Mg(2+) is bound by residues Glu25 and Asp27. Catalysis depends on His41, which acts as the Nucleophile. Intrachain disulfides connect Cys45–Cys51 and Cys47–Cys190. Asp85 is a binding site for Mg(2+).

It belongs to the arthropod phospholipase D family. Class II subfamily. Requires Mg(2+) as cofactor. As to expression, expressed by the venom gland.

Its subcellular location is the secreted. It catalyses the reaction an N-(acyl)-sphingosylphosphocholine = an N-(acyl)-sphingosyl-1,3-cyclic phosphate + choline. The enzyme catalyses an N-(acyl)-sphingosylphosphoethanolamine = an N-(acyl)-sphingosyl-1,3-cyclic phosphate + ethanolamine. It carries out the reaction a 1-acyl-sn-glycero-3-phosphocholine = a 1-acyl-sn-glycero-2,3-cyclic phosphate + choline. The catalysed reaction is a 1-acyl-sn-glycero-3-phosphoethanolamine = a 1-acyl-sn-glycero-2,3-cyclic phosphate + ethanolamine. Dermonecrotic toxins cleave the phosphodiester linkage between the phosphate and headgroup of certain phospholipids (sphingolipid and lysolipid substrates), forming an alcohol (often choline) and a cyclic phosphate. This toxin acts on sphingomyelin (SM). It may also act on ceramide phosphoethanolamine (CPE), lysophosphatidylcholine (LPC) and lysophosphatidylethanolamine (LPE), but not on lysophosphatidylserine (LPS), and lysophosphatidylglycerol (LPG). It acts by transphosphatidylation, releasing exclusively cyclic phosphate products as second products. Induces dermonecrosis, hemolysis, increased vascular permeability, edema, inflammatory response, and platelet aggregation. This Loxosceles hirsuta (Recluse spider) protein is Dermonecrotic toxin LhSicTox-alphaIA2bvi.